A 34-amino-acid polypeptide reads, in one-letter code: MSDIN-like toxin proprotein 3 (34 aa).

A propeptide spanning residues 1–10 (MSDINVIRAP) is cleaved from the precursor. The cyclopeptide (Leu-Pro) cross-link spans 11-18 (LLILSILP). A propeptide spanning residues 19 to 34 (CVGDDIEVLRRGEGLS) is cleaved from the precursor.

Belongs to the MSDIN fungal toxin family. In terms of processing, processed by the macrocyclase-peptidase enzyme POPB to yield a toxic cyclic octapeptide. POPB first removes 10 residues from the N-terminus. Conformational trapping of the remaining peptide forces the enzyme to release this intermediate rather than proceed to macrocyclization. The enzyme rebinds the remaining peptide in a different conformation and catalyzes macrocyclization of the N-terminal 8 residues. Expressed in basidiocarps.

Probable toxin that belongs to the MSDIN-like toxin family responsible for a large number of food poisoning cases and deaths. This chain is MSDIN-like toxin proprotein 3, found in Amanita exitialis (Guangzhou destroying angel).